A 1000-amino-acid polypeptide reads, in one-letter code: Integrin alpha-PS5 (1000 aa).

FG-GAP repeat units lie at residues 15 to 74, 75 to 137, 145 to 198, 199 to 261, 262 to 323, 324 to 379, and 386 to 448; these read KHLK…GSCS, HYVL…DTPP, SLIP…AAQG, SYAV…GEIV, RKLH…FKFE, KKII…GLRD, and DAPS…SESR. An N-linked (GlcNAc...) asparagine glycan is attached at asparagine 58. Asparagine 231 carries N-linked (GlcNAc...) asparagine glycosylation. Residues asparagine 516, asparagine 592, asparagine 622, asparagine 732, asparagine 771, asparagine 829, asparagine 842, asparagine 853, and asparagine 922 are each glycosylated (N-linked (GlcNAc...) asparagine). The helical transmembrane segment at 930–950 threads the bilayer; the sequence is IWYIILSLIAGHLLLGAMTYI. Topologically, residues 951–1000 are cytoplasmic; the sequence is LYKLRFFKRGKKEELKRLLEEHRSETKEPATDCEGNQEEINVEMHSDLEN. Residues 971–980 are compositionally biased toward basic and acidic residues; the sequence is EHRSETKEPA. Residues 971 to 1000 are disordered; sequence EHRSETKEPATDCEGNQEEINVEMHSDLEN.

This sequence belongs to the integrin alpha chain family. In terms of assembly, heterodimer of an alpha and a beta subunit. Alpha-PS5 associates with beta-PS. In terms of tissue distribution, expressed in all follicle cells overlying the oocyte during mid-oogenesis, the strongest expression is observed in the cells covering the anterior end of the oocyte and in the cells forming the dorsal appendages. After completion of oocyte enlargement, expression in main body follicle cells is down-regulated but persists strongly in the dorsal appendage forming cells. Expressed in lamellocytes.

The protein resides in the membrane. Functionally, possible role in cell-cell interactions. Minor involvement in the establishment of the oocyte anterior-posterior length. This is Integrin alpha-PS5 from Drosophila melanogaster (Fruit fly).